The following is a 466-amino-acid chain: Glutamate decarboxylase alpha (466 aa).

Threonine 62 and asparagine 83 together coordinate substrate. Residues serine 126–serine 127, threonine 212, and histidine 275 contribute to the pyridoxal 5'-phosphate site. An N6-(pyridoxal phosphate)lysine modification is found at lysine 276.

This sequence belongs to the group II decarboxylase family. As to quaternary structure, homohexamer. It depends on pyridoxal 5'-phosphate as a cofactor.

It carries out the reaction L-glutamate + H(+) = 4-aminobutanoate + CO2. In terms of biological role, converts glutamate to gamma-aminobutyrate (GABA), consuming one intracellular proton in the reaction. The gad system helps to maintain a near-neutral intracellular pH when cells are exposed to extremely acidic conditions. The ability to survive transit through the acidic conditions of the stomach is essential for successful colonization of the mammalian host by commensal and pathogenic bacteria. The protein is Glutamate decarboxylase alpha (gadA) of Escherichia coli O6:H1 (strain CFT073 / ATCC 700928 / UPEC).